A 273-amino-acid chain; its full sequence is MGSTQSVSGTPARPLPRNKHVSRVADPRSPSAGIQRTPIQVESSPQPNPPAEQLNSLKQAQDPDPRSPTLGIARTPMKISGPDSQCPLVKELSEVFETEVSETEVSESISSPVLGLPQETPLSSELDLPPDPDPQVSLEDQLLPWSQTELNSKQVFAKEEAKQSTETMVSGQTSDKPSRDPETPQSSGSKRSRRKTNNKVLGRSPLTILQDDNSPGTLTLRQGKRPSALSENVKDLKEGVILGTGRFLKAGGGAWEQNEDHDKENQHFALMES.

Disordered regions lie at residues 1–231 and 251–273; these read MGST…ALSE and GGGA…LMES. 2 positions are modified to phosphoserine: S29 and S31. Over residues 32-45 the composition is skewed to polar residues; it reads AGIQRTPIQVESSP. T37 is subject to Phosphothreonine. Residues S44 and S67 each carry the phosphoserine modification. Phosphothreonine is present on T75. The interval 90–124 is F-box-like; that stretch reads KELSEVFETEVSETEVSESISSPVLGLPQETPLSS. S93 is subject to Phosphoserine. Positions 94–105 are enriched in acidic residues; it reads EVFETEVSETEV. Polar residues-rich tracts occupy residues 144 to 154 and 164 to 175; these read PWSQTELNSKQ and STETMVSGQTSD. A Phosphoserine modification is found at S204. Phosphothreonine is present on T207. The span at 210 to 220 shows a compositional bias: polar residues; sequence QDDNSPGTLTL. The residue at position 214 (S214) is a Phosphoserine. Residue T217 is modified to Phosphothreonine. A KEN box motif is present at residues 263 to 265; sequence KEN.

In terms of assembly, interacts with SKP1. Part of a SCF (SKP1-cullin-F-box) protein ligase complex. Post-translationally, ubiquitinated and degraded by the APC/C-Cdh1 complex.

The protein localises to the cytoplasm. It is found in the cytosol. It participates in protein modification; protein ubiquitination. Its function is as follows. F-box-like protein which is required for entry into mitosis. Acts by participating in E3 ligase complexes that mediate the ubiquitination and degradation of WEE1 kinase at G2/M phase. The protein is Cell division cycle-associated protein 3 (Cdca3) of Rattus norvegicus (Rat).